A 533-amino-acid chain; its full sequence is Apolipoprotein N-acyltransferase (533 aa).

Transmembrane regions (helical) follow at residues 17-37, 74-94, 105-125, 127-147, 178-198, and 205-225; these read ALLA…FGFF, WLFG…ALLI, LAIL…AVLA, LLWS…GLLE, VIGV…PALL, and VPGI…GYYA. The region spanning 245–495 is the CN hydrolase domain; that stretch reads VQPAIDQEAK…QGFVDSTLSG (251 aa). Glutamate 290 functions as the Proton acceptor in the catalytic mechanism. The active site involves lysine 354. Residue cysteine 407 is the Nucleophile of the active site. A helical transmembrane segment spans residues 509–529; the sequence is YFWLIIGIVGMIAVISRMGFI.

The protein belongs to the CN hydrolase family. Apolipoprotein N-acyltransferase subfamily.

It is found in the cell inner membrane. It carries out the reaction N-terminal S-1,2-diacyl-sn-glyceryl-L-cysteinyl-[lipoprotein] + a glycerophospholipid = N-acyl-S-1,2-diacyl-sn-glyceryl-L-cysteinyl-[lipoprotein] + a 2-acyl-sn-glycero-3-phospholipid + H(+). It functions in the pathway protein modification; lipoprotein biosynthesis (N-acyl transfer). Functionally, catalyzes the phospholipid dependent N-acylation of the N-terminal cysteine of apolipoprotein, the last step in lipoprotein maturation. The chain is Apolipoprotein N-acyltransferase from Rhizobium rhizogenes (strain K84 / ATCC BAA-868) (Agrobacterium radiobacter).